A 402-amino-acid polypeptide reads, in one-letter code: Putative F-box protein At3g23960 (402 aa).

The segment at 1–23 is disordered; it reads MRSRQLHNVSEDRETLSRRNKRS. The F-box domain maps to 26 to 73; that stretch reads SLNGHIPIDLLIEIFLKLPVKSIATCRSVSKFWTYVLGRQDFTELFLT.

In Arabidopsis thaliana (Mouse-ear cress), this protein is Putative F-box protein At3g23960.